The primary structure comprises 240 residues: Probable septum site-determining protein MinC (240 aa).

Belongs to the MinC family. In terms of assembly, interacts with MinD and FtsZ.

Its function is as follows. Cell division inhibitor that blocks the formation of polar Z ring septums. Rapidly oscillates between the poles of the cell to destabilize FtsZ filaments that have formed before they mature into polar Z rings. Prevents FtsZ polymerization. The chain is Probable septum site-determining protein MinC from Acinetobacter baumannii (strain ACICU).